The following is a 197-amino-acid chain: MTAIFRSASADDARFTDFSNQFLMAMPGMVNDELAGTVIYICEHTPRGALGLVLNRPTDLTLASLFERIDLTVAMGPTADEKVFFGGPVQTDRGFVLHAPAGDYSSSIRLGDLALTTSRDVLQAVAEGQGPARLFVTLGYAGWGAGQLESEMSQNAWLSVAADPVIIFDVPAEERYPAAMRLLGIDPLMLAGEAGHA.

The protein belongs to the UPF0301 (AlgH) family.

The sequence is that of UPF0301 protein BAV3012 from Bordetella avium (strain 197N).